A 74-amino-acid polypeptide reads, in one-letter code: Cytoplasmic envelopment protein 3 (74 aa).

Glycine 2 carries N-myristoyl glycine; by host lipidation. Positions 15-16 (LV) match the Di-leucine-like internalization motif motif. The tract at residues 34-40 (SMEEFDI) is asp/Glu-rich (acidic). A disordered region spans residues 36 to 74 (EEFDIPPPPPLPKPVFKQPGPYKIPARSQRCPSKRRDPY).

Belongs to the herpesviridae cytoplasmic envelopment protein 3 family. In terms of assembly, interacts with cytoplasmic envelopment protein 2; this interaction is essential for the proper localization of each protein to the assembly complex and thus for the production of infectious virus. In terms of processing, myristoylation and palmitoylation (probably on one or more of the nearby cysteines at the N-terminus) enable membrane-binding and Golgi apparatus-specific targeting and are essential for efficient packaging. Phosphorylated. Phosphorylation does not seem to be required for recycling to the host Golgi apparatus. Packaging is selective for underphosphorylated forms.

It localises to the virion tegument. Its subcellular location is the virion membrane. It is found in the host cell membrane. The protein localises to the host Golgi apparatus membrane. Plays an important role in the cytoplasmic envelopment of tegument proteins and capsids during the assembly and egress processes. Also participates in viral entry at the fusion step probably by regulating the core fusion machinery. The polypeptide is Cytoplasmic envelopment protein 3 (Equine herpesvirus 1 (strain Ab4p) (EHV-1)).